We begin with the raw amino-acid sequence, 92 residues long: Small ribosomal subunit protein uS19c (92 aa).

Belongs to the universal ribosomal protein uS19 family.

Its subcellular location is the plastid. The protein localises to the chloroplast. Its function is as follows. Protein S19 forms a complex with S13 that binds strongly to the 16S ribosomal RNA. This is Small ribosomal subunit protein uS19c (rps19) from Chlorella vulgaris (Green alga).